Consider the following 297-residue polypeptide: Phosphatidylserine decarboxylase proenzyme (297 aa).

Active-site charge relay system; for autoendoproteolytic cleavage activity residues include Asp-90, His-147, and Ser-252. Ser-252 (schiff-base intermediate with substrate; via pyruvic acid; for decarboxylase activity) is an active-site residue. Ser-252 is subject to Pyruvic acid (Ser); by autocatalysis.

This sequence belongs to the phosphatidylserine decarboxylase family. PSD-B subfamily. Prokaryotic type I sub-subfamily. Heterodimer of a large membrane-associated beta subunit and a small pyruvoyl-containing alpha subunit. Pyruvate serves as cofactor. In terms of processing, is synthesized initially as an inactive proenzyme. Formation of the active enzyme involves a self-maturation process in which the active site pyruvoyl group is generated from an internal serine residue via an autocatalytic post-translational modification. Two non-identical subunits are generated from the proenzyme in this reaction, and the pyruvate is formed at the N-terminus of the alpha chain, which is derived from the carboxyl end of the proenzyme. The autoendoproteolytic cleavage occurs by a canonical serine protease mechanism, in which the side chain hydroxyl group of the serine supplies its oxygen atom to form the C-terminus of the beta chain, while the remainder of the serine residue undergoes an oxidative deamination to produce ammonia and the pyruvoyl prosthetic group on the alpha chain. During this reaction, the Ser that is part of the protease active site of the proenzyme becomes the pyruvoyl prosthetic group, which constitutes an essential element of the active site of the mature decarboxylase.

It localises to the cell membrane. It catalyses the reaction a 1,2-diacyl-sn-glycero-3-phospho-L-serine + H(+) = a 1,2-diacyl-sn-glycero-3-phosphoethanolamine + CO2. The protein operates within phospholipid metabolism; phosphatidylethanolamine biosynthesis; phosphatidylethanolamine from CDP-diacylglycerol: step 2/2. Catalyzes the formation of phosphatidylethanolamine (PtdEtn) from phosphatidylserine (PtdSer). The protein is Phosphatidylserine decarboxylase proenzyme of Stutzerimonas stutzeri (strain A1501) (Pseudomonas stutzeri).